A 111-amino-acid chain; its full sequence is T cell receptor alpha variable 18 (111 aa).

The first 20 residues, 1 to 20 (MLSASCSGLVILLIFRRTSG), serve as a signal peptide directing secretion. Positions 21–111 (DSVTQTEGPV…DSAVYYCALR (91 aa)) constitute an Ig-like domain. Asparagine 41 carries N-linked (GlcNAc...) asparagine glycosylation. A disulfide bridge connects residues cysteine 42 and cysteine 108.

In terms of assembly, alpha-beta TR is a heterodimer composed of an alpha and beta chain; disulfide-linked. The alpha-beta TR is associated with the transmembrane signaling CD3 coreceptor proteins to form the TR-CD3 (TcR or TCR). The assembly of alpha-beta TR heterodimers with CD3 occurs in the endoplasmic reticulum where a single alpha-beta TR heterodimer associates with one CD3D-CD3E heterodimer, one CD3G-CD3E heterodimer and one CD247 homodimer forming a stable octameric structure. CD3D-CD3E and CD3G-CD3E heterodimers preferentially associate with TR alpha and TR beta chains, respectively. The association of the CD247 homodimer is the last step of TcR assembly in the endoplasmic reticulum and is required for transport to the cell surface.

It is found in the cell membrane. V region of the variable domain of T cell receptor (TR) alpha chain that participates in the antigen recognition. Alpha-beta T cell receptors are antigen specific receptors which are essential to the immune response and are present on the cell surface of T lymphocytes. Recognize peptide-major histocompatibility (MH) (pMH) complexes that are displayed by antigen presenting cells (APC), a prerequisite for efficient T cell adaptive immunity against pathogens. Binding of alpha-beta TR to pMH complex initiates TR-CD3 clustering on the cell surface and intracellular activation of LCK that phosphorylates the ITAM motifs of CD3G, CD3D, CD3E and CD247 enabling the recruitment of ZAP70. In turn ZAP70 phosphorylates LAT, which recruits numerous signaling molecules to form the LAT signalosome. The LAT signalosome propagates signal branching to three major signaling pathways, the calcium, the mitogen-activated protein kinase (MAPK) kinase and the nuclear factor NF-kappa-B (NF-kB) pathways, leading to the mobilization of transcription factors that are critical for gene expression and essential for T cell growth and differentiation. The T cell repertoire is generated in the thymus, by V-(D)-J rearrangement. This repertoire is then shaped by intrathymic selection events to generate a peripheral T cell pool of self-MH restricted, non-autoaggressive T cells. Post-thymic interaction of alpha-beta TR with the pMH complexes shapes TR structural and functional avidity. This chain is T cell receptor alpha variable 18, found in Homo sapiens (Human).